The following is a 239-amino-acid chain: Sugar fermentation stimulation protein homolog (239 aa).

Belongs to the SfsA family.

The protein is Sugar fermentation stimulation protein homolog of Alcanivorax borkumensis (strain ATCC 700651 / DSM 11573 / NCIMB 13689 / SK2).